We begin with the raw amino-acid sequence, 955 residues long: Anion exchange protein 4 (955 aa).

Disordered stretches follow at residues 20 to 50 (VGQLDSGPSSGPCPDDPSDTGSRELGPPEDP), 154 to 190 (HTQTTGSRPCWGPAQSRKAAHNKEAPMQQQCQSPLRQ), and 331 to 352 (PHRTQAEDRHRNGPLAPSPELQ). 4 helical membrane passes run 387-407 (AVLYIYLATVTNAITFGGLLG), 415-435 (GVLESLLGTAVAGAAFCLMAG), 472-492 (VGIWVAVFCLALVATEASVLV), and 503-523 (FCALISLIFIYDAVGKMLNLA). Positions 387–955 (AVLYIYLATV…KAPEINISVN (569 aa)) are membrane (anion exchange). Residues N548 and N572 are each glycosylated (N-linked (GlcNAc...) asparagine). The next 7 membrane-spanning stretches (helical) occupy residues 596 to 616 (VPDIAFFSLLLFLTSFLFAIA), 637 to 657 (FSSILAILLGCGLDALLGLAM), 684 to 704 (PWWLSVAAALPALLLSILIFM), 730 to 750 (LFCVALLMLLTSVLGLPWYVS), 785 to 804 (LTGLAVFTLTGVSIFLAPVL), 811 to 830 (VLYGIFLYMGVAALSSIQFM), and 871 to 891 (LWIIKSTPAAIIFPLMLLGLV). Residues 918–955 (RNVPEKGLEPGHSFSGSDSEDSELMYQPKAPEINISVN) form a disordered region. N951 is a glycosylation site (N-linked (GlcNAc...) asparagine).

The protein belongs to the anion exchanger (TC 2.A.31) family. As to expression, highly expressed in kidney. Expressed in the outer medulla and the inner medulla in the kidney cortex. Only expressed in beta-intercalated cells.

The protein resides in the lateral cell membrane. The protein localises to the apical cell membrane. It localises to the basolateral cell membrane. It catalyses the reaction 2 hydrogencarbonate(out) + chloride(in) + Na(+)(out) = 2 hydrogencarbonate(in) + chloride(out) + Na(+)(in). The enzyme catalyses K(+)(in) + 2 hydrogencarbonate(in) + chloride(out) = K(+)(out) + 2 hydrogencarbonate(out) + chloride(in). It carries out the reaction Li(+)(in) + 2 hydrogencarbonate(in) + chloride(out) = Li(+)(out) + 2 hydrogencarbonate(out) + chloride(in). The catalysed reaction is Rb(+)(in) + 2 hydrogencarbonate(in) + chloride(out) = Rb(+)(out) + 2 hydrogencarbonate(out) + chloride(in). It catalyses the reaction Cs(+)(in) + 2 hydrogencarbonate(in) + chloride(out) = Cs(+)(out) + 2 hydrogencarbonate(out) + chloride(in). Functionally, electroneutral Cl(-)/HCO3(-) antiporter that favors chloride ion entry and efflux of hydrogencarbonate and sodium ion across the basolateral membrane and may participat in salivary secretion. Also mediates Cl(-)/HCO3(-) exchange activity in the presence of K(+) as well as Cs(+), Li(+), and Rb(+). Does not contribute to Cl(-)/HCO3(-) exchanger in the apical membrane of the upper villous epithelium. In Oryctolagus cuniculus (Rabbit), this protein is Anion exchange protein 4.